The primary structure comprises 339 residues: 2-keto-3-deoxygluconate permease (339 aa).

10 helical membrane passes run 10–30, 42–62, 77–97, 100–120, 141–161, 163–183, 199–219, 224–244, 254–274, and 289–309; these read IPGG…TFAP, GLIS…GASI, LVVT…RILP, GVEV…AMDM, AFVL…LGTA, IASF…VGFA, VQTL…LSVI, LLGV…LIVA, TAGI…VLIA, and TLVA…TAMW. The tract at residues 315 to 339 is disordered; sequence GGDGTVPKEDAVEEKAEQQRRRIIK. Over residues 320–339 the composition is skewed to basic and acidic residues; it reads VPKEDAVEEKAEQQRRRIIK.

Belongs to the KdgT transporter family.

Its subcellular location is the cell inner membrane. It catalyses the reaction 2-dehydro-3-deoxy-D-gluconate(in) + H(+)(in) = 2-dehydro-3-deoxy-D-gluconate(out) + H(+)(out). With respect to regulation, uptake is inhibited by the protonophore uncouplers carbonyl cyanide m-chlorophenylhydrazone (CCCP) and 2,4-dinitrophenol, and by NaN(3). In terms of biological role, catalyzes the proton-dependent uptake of 2-keto-3-deoxygluconate (KDG) into the cell. Can also mediate the uptake of glucuronate with a low affinity, and may mediate the uptake of 5-keto-4-deoxyuronate (DKI) and 2,5-diketo-3-deoxygluconate (DKII), which are intermediates in pectin degradation. The polypeptide is 2-keto-3-deoxygluconate permease (Dickeya chrysanthemi (Pectobacterium chrysanthemi)).